Consider the following 284-residue polypeptide: 2-dehydro-3-deoxyphosphooctonate aldolase (284 aa).

Belongs to the KdsA family.

Its subcellular location is the cytoplasm. It catalyses the reaction D-arabinose 5-phosphate + phosphoenolpyruvate + H2O = 3-deoxy-alpha-D-manno-2-octulosonate-8-phosphate + phosphate. It participates in carbohydrate biosynthesis; 3-deoxy-D-manno-octulosonate biosynthesis; 3-deoxy-D-manno-octulosonate from D-ribulose 5-phosphate: step 2/3. The protein operates within bacterial outer membrane biogenesis; lipopolysaccharide biosynthesis. The chain is 2-dehydro-3-deoxyphosphooctonate aldolase from Pseudoalteromonas translucida (strain TAC 125).